The sequence spans 383 residues: Corticosteroid-binding globulin (383 aa).

N-linked (GlcNAc...) asparagine glycans are attached at residues Asn74 and Asn154. Gln232 contributes to the cortisol binding site. Residue Asn238 is glycosylated (N-linked (GlcNAc...) asparagine). Gln264 is a cortisol binding site. Asn308 carries an N-linked (GlcNAc...) asparagine glycan. Trp371 provides a ligand contact to cortisol.

The protein belongs to the serpin family. As to expression, produced and secreted by hepatocytes, but has also been identified in a number of glycocorticoid responsive cells (it is found in maternal lung, spleen, and ovary and fetal kidney).

It localises to the secreted. Its function is as follows. Major transport protein for glucocorticoids and progestins in the blood of almost all vertebrate species. This Oryctolagus cuniculus (Rabbit) protein is Corticosteroid-binding globulin (SERPINA6).